Reading from the N-terminus, the 62-residue chain is Conotoxin Im5.1 (62 aa).

An N-terminal signal peptide occupies residues 1–19; that stretch reads MYCLPVFIILLLLISSAPS. A propeptide spanning residues 20–48 is cleaved from the precursor; that stretch reads TPPQPRNKDRVHLISLLDNHKQILQRDWN. Trp-60 carries the tryptophan amide modification.

This sequence belongs to the conotoxin T superfamily. Post-translationally, contains 2 disulfide bonds that can be either 'C1-C3, C2-C4' or 'C1-C4, C2-C3', since these disulfide connectivities have been observed for conotoxins with cysteine framework V (for examples, see AC P0DQQ7 and AC P81755). As to expression, expressed by the venom duct.

It localises to the secreted. The sequence is that of Conotoxin Im5.1 from Conus imperialis (Imperial cone).